A 545-amino-acid chain; its full sequence is Chaperonin GroEL (545 aa).

Residues 30–33, lysine 51, 87–91, glycine 415, and aspartate 495 contribute to the ATP site; these read TLGP and DGTTT.

This sequence belongs to the chaperonin (HSP60) family. Forms a cylinder of 14 subunits composed of two heptameric rings stacked back-to-back. Interacts with the co-chaperonin GroES.

It localises to the cytoplasm. It catalyses the reaction ATP + H2O + a folded polypeptide = ADP + phosphate + an unfolded polypeptide.. Functionally, together with its co-chaperonin GroES, plays an essential role in assisting protein folding. The GroEL-GroES system forms a nano-cage that allows encapsulation of the non-native substrate proteins and provides a physical environment optimized to promote and accelerate protein folding. The polypeptide is Chaperonin GroEL (Shewanella sp. (strain ANA-3)).